Reading from the N-terminus, the 256-residue chain is Adenylate kinase (256 aa).

Position 49 to 54 (Gly49 to Thr54) interacts with ATP. Positions Ala69–Val98 are NMP. Residues Thr70, Arg75, Gly96 to Val98, Gly125 to Arg128, and Gln132 each bind AMP. The LID stretch occupies residues Gly166–Asp203. Residues Arg167 and Ser176 to Tyr177 contribute to the ATP site. Arg200 and Arg211 together coordinate AMP. ATP is bound at residue Gln239.

The protein belongs to the adenylate kinase family. AK2 subfamily. Monomer.

Its subcellular location is the cytoplasm. The protein localises to the cytosol. The protein resides in the mitochondrion intermembrane space. The catalysed reaction is AMP + ATP = 2 ADP. Catalyzes the reversible transfer of the terminal phosphate group between ATP and AMP. Plays an important role in cellular energy homeostasis and in adenine nucleotide metabolism. Adenylate kinase activity is critical for regulation of the phosphate utilization and the AMP de novo biosynthesis pathways. This Coprinopsis cinerea (strain Okayama-7 / 130 / ATCC MYA-4618 / FGSC 9003) (Inky cap fungus) protein is Adenylate kinase.